The following is a 1265-amino-acid chain: Protein transport protein SEC31 (1265 aa).

WD repeat units follow at residues 6 to 46 (EIAR…ELWD), 61 to 105 (TVDN…KTKD), 116 to 156 (KHTG…EPFA), 162 to 202 (TPMD…EVLH), 209 to 252 (GGRA…APEK), 256 to 296 (GHKK…KLGE), and 299 to 339 (TTAN…PSVS). Residues 380–403 (SFGFGSKLVIINTDSSGKSTVKVD) form a WD 8; interaction with SEC13 repeat. The span at 457–480 (KESLFEDANNDEKEATSPETKKEN) shows a compositional bias: basic and acidic residues. Disordered regions lie at residues 457 to 485 (KESL…EDDF), 765 to 784 (VKSS…GQTR), and 793 to 1163 (PAYA…IPEN). The segment covering 794–810 (AYAPPVQAPPVQAPQPP) has biased composition (pro residues). Low complexity-rich tracts occupy residues 811 to 824 (LVQQ…QQQP), 865 to 875 (TPSSLSGTTSG), 901 to 931 (AKTA…FGSP), 939 to 951 (SQPG…SSAG), and 969 to 987 (SISR…TVPA). Residues 1004–1023 (SDASQPPSSGFASPTLNSSP) show a composition bias toward polar residues. Composition is skewed to pro residues over residues 1062–1071 (YAPPKNPYAV) and 1083–1101 (APPP…PPQP).

This sequence belongs to the WD repeat SEC31 family. As to quaternary structure, the COPII coat is composed of at least 5 proteins: the SEC23/24 complex, the SEC13/31 complex, and the protein SAR1. SEC13 and SEC31 make a 2:2 tetramer that forms the edge element of the COPII outer coat. The tetramer self-assembles in multiple copies to form the complete polyhedral cage. Interacts (via WD 8) with SEC13.

The protein resides in the cytoplasmic vesicle. It localises to the COPII-coated vesicle membrane. It is found in the endoplasmic reticulum membrane. Its function is as follows. Component of the coat protein complex II (COPII) which promotes the formation of transport vesicles from the endoplasmic reticulum (ER). The coat has two main functions, the physical deformation of the endoplasmic reticulum membrane into vesicles and the selection of cargo molecules. In Candida albicans (strain SC5314 / ATCC MYA-2876) (Yeast), this protein is Protein transport protein SEC31 (PGA63).